The sequence spans 633 residues: 1-deoxy-D-xylulose-5-phosphate synthase (633 aa).

Thiamine diphosphate-binding positions include histidine 72 and 113–115 (GHS). Aspartate 144 lines the Mg(2+) pocket. Thiamine diphosphate-binding positions include 145-146 (GA), asparagine 173, tyrosine 284, and glutamate 367. Asparagine 173 provides a ligand contact to Mg(2+).

Belongs to the transketolase family. DXPS subfamily. In terms of assembly, homodimer. The cofactor is Mg(2+). Thiamine diphosphate serves as cofactor.

It carries out the reaction D-glyceraldehyde 3-phosphate + pyruvate + H(+) = 1-deoxy-D-xylulose 5-phosphate + CO2. It participates in metabolic intermediate biosynthesis; 1-deoxy-D-xylulose 5-phosphate biosynthesis; 1-deoxy-D-xylulose 5-phosphate from D-glyceraldehyde 3-phosphate and pyruvate: step 1/1. In terms of biological role, catalyzes the acyloin condensation reaction between C atoms 2 and 3 of pyruvate and glyceraldehyde 3-phosphate to yield 1-deoxy-D-xylulose-5-phosphate (DXP). In Lysinibacillus sphaericus (strain C3-41), this protein is 1-deoxy-D-xylulose-5-phosphate synthase.